The following is a 1237-amino-acid chain: Mediator of RNA polymerase II transcription subunit 5 (1237 aa).

Disordered regions lie at residues 1109-1131 (DDEPCSPQPPHAAANATSHTSNA) and 1202-1226 (HGAQQCRERTQNDAPVNGGKDADSG). Residues 1119 to 1131 (HAAANATSHTSNA) are compositionally biased toward low complexity.

It belongs to the Mediator complex subunit 5 family. In terms of assembly, component of the Mediator complex.

The protein localises to the nucleus. Its function is as follows. Component of the Mediator complex, a coactivator involved in the regulated transcription of nearly all RNA polymerase II-dependent genes. Mediator functions as a bridge to convey information from gene-specific regulatory proteins to the basal RNA polymerase II transcription machinery. Mediator is recruited to promoters by direct interactions with regulatory proteins and serves as a scaffold for the assembly of a functional preinitiation complex with RNA polymerase II and the general transcription factors. This chain is Mediator of RNA polymerase II transcription subunit 5 (NUT1), found in Mycosarcoma maydis (Corn smut fungus).